A 433-amino-acid chain; its full sequence is Keratin, type I cytoskeletal 17 (433 aa).

A disordered region spans residues 1–24; it reads MTTTIRQFTSSSSIKGSSGLGGGS. The segment at 1–83 is head; it reads MTTTIRQFTS…GGVDGLLAGG (83 aa). Residues Ser-12 and Ser-13 each carry the phosphoserine modification. Residue Lys-15 forms a Glycyl lysine isopeptide (Lys-Gly) (interchain with G-Cter in SUMO1); alternate linkage. Residue Lys-15 forms a Glycyl lysine isopeptide (Lys-Gly) (interchain with G-Cter in SUMO2); alternate linkage. A phosphoserine mark is found at Ser-25, Ser-32, Ser-34, and Ser-39. A Phosphoserine; by RPS6KA1 modification is found at Ser-44. The coil 1A stretch occupies residues 84-120; sequence EKATMQNLNDRLASYLDKVRALEEANTELEVKIRDWY. One can recognise an IF rod domain in the interval 84-395; it reads EKATMQNLND…RLLEGEDAHL (312 aa). Phosphothreonine is present on Thr-110. The segment at 121–138 is linker 1; that stretch reads QKQAPGPARDYSAYYHTI. Residues 139 to 230 are coil 1B; the sequence is EDLKNKILVA…NHEEEMNALR (92 aa). The tract at residues 231 to 250 is linker 12; that stretch reads GQVGGEINVEMDAAPGVDLS. A coil 2 region spans residues 251–392; it reads RILSEMRDQY…TYRRLLEGED (142 aa). Residue Lys-278 forms a Glycyl lysine isopeptide (Lys-Gly) (interchain with G-Cter in SUMO2) linkage. Thr-279 carries the post-translational modification Phosphothreonine. Ser-323 carries the phosphoserine modification. Residues 393-433 form a tail region; the sequence is AHLTQYKPKEPVTTRQVRTIVEEVQDGKVISSREQVHQTTR. Glycyl lysine isopeptide (Lys-Gly) (interchain with G-Cter in SUMO1); alternate cross-links involve residues Lys-399, Lys-401, and Lys-420. Residues Lys-399, Lys-401, and Lys-420 each participate in a glycyl lysine isopeptide (Lys-Gly) (interchain with G-Cter in SUMO2); alternate cross-link.

The protein belongs to the intermediate filament family. In terms of assembly, heterodimer of a type I and a type II keratin. KRT17 associates with KRT6 isomers (KRT6A or KRT6B). Interacts with TRADD and SFN. Post-translationally, phosphorylation at Ser-44 occurs in a growth- and stress-dependent fashion in skin keratinocytes, it has no effect on filament organization. As to expression, expressed strongly in outer root sheath and medulla region of hair follicle and in the early differentiating epithelial cells (trichocytes) within the hair bulb region. Weak expression in the matrix cells of hair bulb. Also present in the sweat gland within the skin, vibrissae follicle, salivary gland, tooth and thymus.

It is found in the cytoplasm. In terms of biological role, type I keratin involved in the formation and maintenance of various skin appendages, specifically in determining shape and orientation of hair. Required for the correct growth of hair follicles, in particular for the persistence of the anagen (growth) state. Modulates the function of TNF-alpha in the specific context of hair cycling. Regulates protein synthesis and epithelial cell growth through binding to the adapter protein SFN and by stimulating Akt/mTOR pathway. Involved in tissue repair. May be a marker of basal cell differentiation in complex epithelia and therefore indicative of a certain type of epithelial 'stem cells'. Acts as a promoter of epithelial proliferation by acting a regulator of immune response in skin: promotes Th1/Th17-dominated immune environment contributing to the development of basaloid skin tumors. May act as an autoantigen in the immunopathogenesis of psoriasis, with certain peptide regions being a major target for autoreactive T-cells and hence causing their proliferation. In Mus musculus (Mouse), this protein is Keratin, type I cytoskeletal 17 (Krt17).